The following is a 332-amino-acid chain: Putative peptide import ATP-binding protein BMEII0206 (332 aa).

Residues 11 to 261 (LEVSNLSVDF…PLHPYTEGLL (251 aa)) form the ABC transporter domain. 47 to 54 (GESGSGKS) contributes to the ATP binding site.

Belongs to the ABC transporter superfamily. In terms of assembly, the complex is composed of two ATP-binding proteins (BMEII0205 and BMEII0206), two transmembrane proteins (BMEII0207/BMEII0208 and BMEII0209) and a solute-binding protein (BMEII0210).

It localises to the cell inner membrane. Functionally, probably part of an ABC transporter complex that could be involved in peptide import. Probably responsible for energy coupling to the transport system. This is Putative peptide import ATP-binding protein BMEII0206 from Brucella melitensis biotype 1 (strain ATCC 23456 / CCUG 17765 / NCTC 10094 / 16M).